A 922-amino-acid chain; its full sequence is Non-centrosomal microtubule array protein 1 (922 aa).

Polar residues predominate over residues 1-10 (MSNERVSTGS). Disordered stretches follow at residues 1-134 (MSNE…HLPP), 250-277 (PVRL…TVPR), 465-491 (KSRH…QMNL), and 533-563 (TQKE…SNLS). Basic and acidic residues-rich tracts occupy residues 43–54 (SMERKDMPDRPK) and 70–94 (PKDR…KECA). Residues 99–113 (SNTSSEHSSRSNSST) are compositionally biased toward low complexity. Composition is skewed to basic and acidic residues over residues 256 to 276 (RGDT…DTVP) and 468 to 484 (HLSE…ERRG). Over residues 539–563 (SHSTPSQSRHSSSKSSHFNGSSNLS) the composition is skewed to low complexity. A coiled-coil region spans residues 564 to 728 (TSEQLRLQEM…RSVSTLRLEQ (165 aa)).

It is found in the cytoplasm. Its subcellular location is the cytoskeleton. It localises to the apical cell membrane. The protein resides in the cell junction. The protein localises to the hemidesmosome. It is found in the adherens junction. In terms of biological role, plays a role in the assembly of microtubule arrays in the germline acting redundantly with ptrn-1 to control circumferential microtubule assembly along the body which is necessary for larval development, viability, and morphology and integrity of the epidermis. Required for microtubule stability and anchorage by binding to microtubule minus ends. Recruited to hemidesomosomes in early embryonic elongation to direct the nucleation and growth of non-centrosomal microtubules. Required for normal nuclear migration in the embryonic epidermis. Functionally, directs the assembly of non-centrosomal microtubule arrays that determine the position of nuclei within intracellular compartments in the epidermis and this is independent of ptrn-1 activity. In Caenorhabditis elegans, this protein is Non-centrosomal microtubule array protein 1.